Here is a 234-residue protein sequence, read N- to C-terminus: Cytidylate kinase (234 aa).

10-18 (GYSACGKST) is a binding site for ATP.

This sequence belongs to the cytidylate kinase family. Type 1 subfamily.

Its subcellular location is the cytoplasm. It carries out the reaction CMP + ATP = CDP + ADP. The enzyme catalyses dCMP + ATP = dCDP + ADP. The polypeptide is Cytidylate kinase (Cytophaga hutchinsonii (strain ATCC 33406 / DSM 1761 / CIP 103989 / NBRC 15051 / NCIMB 9469 / D465)).